The primary structure comprises 248 residues: uncharacterized protein (248 aa).

An NADP(+)-binding site is contributed by 8-32 (IVTGAAQGIGQAYAQALAREGASVV). Ser-143 contacts substrate. Tyr-153 functions as the Proton acceptor in the catalytic mechanism.

The protein belongs to the short-chain dehydrogenases/reductases (SDR) family.

This is an uncharacterized protein from Mycobacterium tuberculosis (strain CDC 1551 / Oshkosh).